Reading from the N-terminus, the 487-residue chain is MAGSNTLSSSEHGDDPRGHSYSIHIQTRGTTLDKYPAKQHARNVARQLGLTDGLIYLMSQSTRTLEDSDQPQPFRQRRYFFYLSGVDEPDCHLTFDIKSDILTLYVPHYDLRKAIWVGPTLRPSEAMMRYDLNAAKTYDELSKNIRTWASKRMSPVIYILHEGQKPNINAHFLAFNHEDLLPAMDACREIKDEHEIDLIRRANEISASAHIEVLLGIRNMQNEAEIHGKFLDTCVSQGARNQSYEIIAASGENAAILHYTKNNEPLDDRQLVCLDAGAEWNCYASDVTRTFPRRPYWPSCESANIYSVVQRMQEECINGLKEGVRYLDLHILAHRIAIEELLSLGILKGGSTEEILQSGASLVFFPHGLGHHVGLEVHDVSPTPLMAFSLDKYKGLPLLSCRPPCTLSAPYLKAGMVVTVEPGIYFSRPALKDARRKPLSKYIDMDVVQKYIPVGGVRIEDDVLVTRDGFENLTKAPKGREMLKTIR.

A compositionally biased stretch (polar residues) spans 1-10 (MAGSNTLSSS). The disordered stretch occupies residues 1 to 22 (MAGSNTLSSSEHGDDPRGHSYS). Mn(2+) contacts are provided by Asp-275, Asp-286, Glu-421, and Glu-460.

Belongs to the peptidase M24B family. It depends on Mn(2+) as a cofactor.

The catalysed reaction is Release of any N-terminal amino acid, including proline, that is linked to proline, even from a dipeptide or tripeptide.. Catalyzes the removal of a penultimate prolyl residue from the N-termini of peptides. The protein is Probable Xaa-Pro aminopeptidase CPSG_02684 of Coccidioides posadasii (strain RMSCC 757 / Silveira) (Valley fever fungus).